The primary structure comprises 222 residues: uncharacterized protein (222 aa).

Residues 43–73 (SQNEEFEYEMERMLSILNEQTMDLTQLQSRI) are a coiled coil.

This is an uncharacterized protein from Rickettsia conorii (strain ATCC VR-613 / Malish 7).